The chain runs to 147 residues: Microsomal glutathione S-transferase 2 (147 aa).

The next 3 helical transmembrane spans lie at 6-26 (SLLA…AWRV), 62-82 (VFIV…AACL), and 107-127 (GFRL…LGVA).

As to quaternary structure, homotrimer.

The protein resides in the endoplasmic reticulum membrane. The protein localises to the microsome membrane. The catalysed reaction is RX + glutathione = an S-substituted glutathione + a halide anion + H(+). It carries out the reaction 1-chloro-2,4-dinitrobenzene + glutathione = 2,4-dinitrophenyl-S-glutathione + chloride + H(+). The enzyme catalyses leukotriene C4 = leukotriene A4 + glutathione. It catalyses the reaction (5S)-hydroperoxy-(6E,8Z,11Z,14Z)-eicosatetraenoate + 2 glutathione = (5S)-hydroxy-(6E,8Z,11Z,14Z)-eicosatetraenoate + glutathione disulfide + H2O. With respect to regulation, each monomer binds on GSH molecule but only one subunit is catalytically active. Functionally, catalyzes several different glutathione-dependent reactions. Catalyzes the glutathione-dependent reduction of lipid hydroperoxides, such as 5-HPETE. Has glutathione transferase activity, toward xenobiotic electrophiles, such as 1-chloro-2, 4-dinitrobenzene (CDNB). Also catalyzes the conjugation of leukotriene A4 with reduced glutathione to form leukotriene C4 (LTC4). Involved in oxidative DNA damage induced by ER stress and anticancer agents by activating LTC4 biosynthetic machinery in nonimmune cells. This is Microsomal glutathione S-transferase 2 from Mus musculus (Mouse).